Reading from the N-terminus, the 470-residue chain is MLKVFNTMTRQKETFEPITPGVVNMYVCGPTVYNYIHIGNARSAIAFDTIRRYFEYRGYQVKYVSNFTDVDDKMINEANKEGITVPELGDRFIAAFKEDTAALNIEPATVNPRATEHINEIIEFVQDLIDKDYAYPVDGDVYYRAHKFSHYGELAHLNLDDLEEGASQHTNDEETARKEDPVDFALWKGAKPGEISWPSPWGAGRPGWHIECSVMSTHYLGETFDIHGGGEDLIFPHHQNEIAQSEAKTGKTFVHYWLHNGFVTIGDDNEKMSKSLGNFVTVHDILKTVDPQTLRFFMSTTQYRRPIQYTQQNLDTAERNLERLQTAYDNMGYRLKDAEAGNDPKVEQETRQIVADYIDAMDDDFNVQNGIAKVHELARLGNVYAERPVVFAGTLDFIRQTLSDLLSVFGIKFAAAATLDDDRIQALIDERLAARKSRDFLRSDEIREQLKSQGIILEDTPQGTRWRKEN.

A Zn(2+)-binding site is contributed by Cys-28. The short motif at 30-40 (PTVYNYIHIGN) is the 'HIGH' region element. Residues Cys-212, His-237, and Glu-241 each coordinate Zn(2+). The short motif at 271-275 (KMSKS) is the 'KMSKS' region element. Lys-274 is a binding site for ATP.

Belongs to the class-I aminoacyl-tRNA synthetase family. As to quaternary structure, monomer. Requires Zn(2+) as cofactor.

The protein resides in the cytoplasm. The enzyme catalyses tRNA(Cys) + L-cysteine + ATP = L-cysteinyl-tRNA(Cys) + AMP + diphosphate. The chain is Cysteine--tRNA ligase from Levilactobacillus brevis (strain ATCC 367 / BCRC 12310 / CIP 105137 / JCM 1170 / LMG 11437 / NCIMB 947 / NCTC 947) (Lactobacillus brevis).